The following is a 927-amino-acid chain: Autophagy-related protein 13 (927 aa).

5 disordered regions span residues 1–66 (MHQQ…PPAD), 334–359 (SLPQ…RSKP), 388–559 (LRSV…AQPG), 628–716 (TESM…TIRE), and 786–927 (QMQL…RRGW). Residues 14–30 (PGATTQPNLPSRSNSTR) are compositionally biased toward polar residues. Composition is skewed to polar residues over residues 393–402 (QPGSDTSSPP), 513–523 (PASTSRYSSSF), and 544–557 (GSSG…SVAQ). The segment covering 630–671 (SMTSSVQMQRSSSSSSRQLTSVPGMTAPASVSASSSPGKPLS) has biased composition (low complexity). The span at 684-716 (LSENSIIDYSGQGRITSRQGRTSDNTQPGTIRE) shows a compositional bias: polar residues. The span at 793 to 803 (STQRPSDRLEP) shows a compositional bias: basic and acidic residues. Positions 850-868 (HKQTPPQSSRGSFNGSLNR) are enriched in polar residues. Over residues 891–901 (PQGRRSIEEAR) the composition is skewed to basic and acidic residues.

Belongs to the ATG13 family. Fungi subfamily. Hypophosphorylated form interacts with ATG1 to form the ATG1-ATG13 kinase complex. The ATG1-ATG13 complex interacts with the ATG17-ATG29-ATG31 complex through direct interaction with ATG17.

The protein resides in the cytoplasm. The protein localises to the preautophagosomal structure. Activates the ATG1 kinase in a nutritional condition dependent manner through the TOR pathway, leading to autophagy. Involved in ATG9 and ATG23 cycling through the pre-autophagosomal structure. Also involved in cytoplasm to vacuole transport (Cvt) and more specifically in Cvt vesicle formation. Seems to play a role in the switching machinery regulating the conversion between the Cvt pathway and autophagy. Finally, ATG13 is also required for glycogen storage during stationary phase. Autophagy is required for proper vegetative growth, asexual/sexual reproduction, and full virulence. Autophagy is particularly involved in the biosynthesis of deoxynivalenol (DON), an important virulence determinant. In Gibberella zeae (strain ATCC MYA-4620 / CBS 123657 / FGSC 9075 / NRRL 31084 / PH-1) (Wheat head blight fungus), this protein is Autophagy-related protein 13.